The sequence spans 62 residues: Large ribosomal subunit protein uL30 (62 aa).

It belongs to the universal ribosomal protein uL30 family. In terms of assembly, part of the 50S ribosomal subunit.

The polypeptide is Large ribosomal subunit protein uL30 (Paracoccus denitrificans (strain Pd 1222)).